The sequence spans 288 residues: Sulfur carrier protein FdhD (288 aa).

A disordered region spans residues 1 to 23; sequence MMRCMQSPEVHPAAAGDAEPPTH. Cysteine 127 acts as the Cysteine persulfide intermediate in catalysis.

Belongs to the FdhD family.

It is found in the cytoplasm. In terms of biological role, required for formate dehydrogenase (FDH) activity. Acts as a sulfur carrier protein that transfers sulfur from IscS to the molybdenum cofactor prior to its insertion into FDH. The chain is Sulfur carrier protein FdhD from Cupriavidus necator (strain ATCC 17699 / DSM 428 / KCTC 22496 / NCIMB 10442 / H16 / Stanier 337) (Ralstonia eutropha).